A 252-amino-acid polypeptide reads, in one-letter code: tRNA (guanine-N(1)-)-methyltransferase (252 aa).

Residues Gly117 and 137–142 (IGDYVL) contribute to the S-adenosyl-L-methionine site.

This sequence belongs to the RNA methyltransferase TrmD family. As to quaternary structure, homodimer.

The protein localises to the cytoplasm. It catalyses the reaction guanosine(37) in tRNA + S-adenosyl-L-methionine = N(1)-methylguanosine(37) in tRNA + S-adenosyl-L-homocysteine + H(+). In terms of biological role, specifically methylates guanosine-37 in various tRNAs. The chain is tRNA (guanine-N(1)-)-methyltransferase from Idiomarina loihiensis (strain ATCC BAA-735 / DSM 15497 / L2-TR).